The chain runs to 1148 residues: Small G protein signaling modulator 1 (1148 aa).

An RUN domain is found at 36 to 190; the sequence is HEDSSHIISF…EYTKMKTADH (155 aa). Residues 256-297 form an important for interaction with RAB9A and RAB9B region; the sequence is LLYGKNNVLVQPRDDMEAVPGYLSLHQTADVMTLKWTPNQLM. The segment at 301 to 350 is required for interaction with RAP family members; that stretch reads VGDLDYEKSVYWDYAMTIRLEEIVYLHCHQQVDSGGTVVLVSQDGIQRPP. Disordered regions lie at residues 377–411, 700–830, and 871–894; these read DPPL…DKDD, DSTI…PREE, and GWRS…EEPE. The span at 385–397 shows a compositional bias: basic residues; sequence GKGKVFPKLRKRS. The 465-residue stretch at 617–1081 folds into the Rab-GAP TBC domain; the sequence is GIQPEIRKAV…LVWETIWAAK (465 aa). Positions 702–716 are enriched in polar residues; the sequence is TISNESSQSCSSGRQ. The segment covering 742-751 has biased composition (basic and acidic residues); that stretch reads AEGRLEEKQP. The segment covering 757-802 has biased composition (polar residues); it reads NLVNGTCSPDSGHPSSHNFSSGLSEHSEPSLSTEDSVLDAQRNTPT. 2 stretches are compositionally biased toward basic and acidic residues: residues 805-816 and 871-883; these read RPRDGSVDDRQS and GWRS…HGQA. Positions 884 to 894 are enriched in acidic residues; that stretch reads DSEDNLSEEPE.

It belongs to the RUTBC family. Interacts with RAB9A (GTP-bound form) and RAB9B (GTP-bound form); has much lower affinity for GDP-bound RAB9A and RAB9B. Interacts with RAB3A, RAB4A, RAB5A, RAB8A, RAB11A, RAP1A, RAP1B, RAP2A and RAP2B. No interaction with RAB27A. In terms of tissue distribution, mainly expressed in brain, heart and testis.

It localises to the golgi apparatus. It is found in the trans-Golgi network. The protein localises to the cytoplasmic vesicle membrane. The protein resides in the cytoplasm. In terms of biological role, interacts with numerous Rab family members, functioning as Rab effector for some, and as GTPase activator for others. Promotes GTP hydrolysis by RAB34 and RAB36. Probably functions as a GTPase effector with RAB9A and RAB9B; does not stimulate GTP hydrolysis with RAB9A and RAB9B. This is Small G protein signaling modulator 1 (SGSM1) from Homo sapiens (Human).